Here is a 128-residue protein sequence, read N- to C-terminus: uncharacterized protein (128 aa).

This is an uncharacterized protein from Schizosaccharomyces pombe (strain 972 / ATCC 24843) (Fission yeast).